A 144-amino-acid polypeptide reads, in one-letter code: Transcription antitermination protein NusB (144 aa).

The protein belongs to the NusB family.

Functionally, involved in transcription antitermination. Required for transcription of ribosomal RNA (rRNA) genes. Binds specifically to the boxA antiterminator sequence of the ribosomal RNA (rrn) operons. The polypeptide is Transcription antitermination protein NusB (Streptococcus agalactiae serotype Ia (strain ATCC 27591 / A909 / CDC SS700)).